Consider the following 321-residue polypeptide: AA9 family lytic polysaccharide monooxygenase C (321 aa).

A signal peptide spans 1–18; sequence MKLQLIIPFSFLISYVSA. His-19 provides a ligand contact to Cu(2+). The N-linked (GlcNAc...) asparagine glycan is linked to Asn-33. Cystine bridges form between Cys-57–Cys-191 and Cys-161–Cys-242. His-103 provides a ligand contact to Cu(2+). His-177 and Gln-186 together coordinate O2. A Cu(2+)-binding site is contributed by Tyr-188. Asn-195 is a glycosylation site (N-linked (GlcNAc...) asparagine). Residues 283–319 enclose the CBM1 domain; sequence GTAAIYAQCGGQGWTGATVCASGSKCVVSSAFYSQCL.

This sequence belongs to the polysaccharide monooxygenase AA9 family. The cofactor is Cu(2+).

The protein resides in the secreted. The enzyme catalyses [(1-&gt;4)-beta-D-glucosyl]n+m + reduced acceptor + O2 = 4-dehydro-beta-D-glucosyl-[(1-&gt;4)-beta-D-glucosyl]n-1 + [(1-&gt;4)-beta-D-glucosyl]m + acceptor + H2O.. Its function is as follows. Major lytic polysaccharide monooxygenase (LPMO) that depolymerizes crystalline and amorphous polysaccharides via the oxidation of scissile alpha- or beta-(1-4)-glycosidic bonds, yielding C1 and C4 oxidation products. Catalysis by LPMOs requires the reduction of the active-site copper from Cu(II) to Cu(I) by a reducing agent and H(2)O(2) or O(2) as a cosubstrate. The polypeptide is AA9 family lytic polysaccharide monooxygenase C (Botryotinia fuckeliana (strain B05.10) (Noble rot fungus)).